We begin with the raw amino-acid sequence, 448 residues long: Asparagine--tRNA ligase (448 aa).

This sequence belongs to the class-II aminoacyl-tRNA synthetase family. In terms of assembly, homodimer.

It is found in the cytoplasm. It catalyses the reaction tRNA(Asn) + L-asparagine + ATP = L-asparaginyl-tRNA(Asn) + AMP + diphosphate + H(+). In Streptococcus pyogenes serotype M2 (strain MGAS10270), this protein is Asparagine--tRNA ligase.